We begin with the raw amino-acid sequence, 491 residues long: Cobyric acid synthase (491 aa).

Residues Ala253–Leu429 enclose the GATase cobBQ-type domain. Cys334 functions as the Nucleophile in the catalytic mechanism. The active site involves His421.

The protein belongs to the CobB/CobQ family. CobQ subfamily.

The protein operates within cofactor biosynthesis; adenosylcobalamin biosynthesis. Functionally, catalyzes amidations at positions B, D, E, and G on adenosylcobyrinic A,C-diamide. NH(2) groups are provided by glutamine, and one molecule of ATP is hydrogenolyzed for each amidation. The sequence is that of Cobyric acid synthase from Mycobacterium marinum (strain ATCC BAA-535 / M).